A 381-amino-acid polypeptide reads, in one-letter code: MVKKEMIAMILAGGQGTRLKNLTKKIAKPAVPFGAKYRIIDFTLSNCINSGIDTVGVLTQYRPLSLLKHIGSGIPFDLNRLNGGVVLLSPYVKESEGYWYAGTAHAIFENIDFMNEYDPTYALILSGDHIYKMDYSKMLDFHKEKNANVTIATINVSFEEASRFGILNTNENNMVEEFEEKPKIPKSTKASMGVYIFNYQLLKDTFEELKSKGNNFQDFGHNILPYILKKYSKIFAYEFNGYWKDVGTISTFYEANLDLIKNHKNLDLREKNWTIFTKSSSHSPQYITSGGNVVNSLVANGAKIEGHVSNSVIFENVKIGKNTIIEDSVIMSNAIIGENSFIKKTIIMENTVVKEKMVLNSLNNQSLNEEDGIILYDGKEK.

Alpha-D-glucose 1-phosphate contacts are provided by residues Tyr100, Gly165, 180 to 181 (EK), and Ser191.

This sequence belongs to the bacterial/plant glucose-1-phosphate adenylyltransferase family. In terms of assembly, homotetramer.

The enzyme catalyses alpha-D-glucose 1-phosphate + ATP + H(+) = ADP-alpha-D-glucose + diphosphate. The protein operates within glycan biosynthesis; glycogen biosynthesis. In terms of biological role, involved in the biosynthesis of ADP-glucose, a building block required for the elongation reactions to produce glycogen. Catalyzes the reaction between ATP and alpha-D-glucose 1-phosphate (G1P) to produce pyrophosphate and ADP-Glc. The chain is Glucose-1-phosphate adenylyltransferase from Mycoplasma mobile (strain ATCC 43663 / 163K / NCTC 11711) (Mesomycoplasma mobile).